The primary structure comprises 195 residues: CASP-like protein 1B1 (195 aa).

Residues 1-22 (MGLQNEEKLELGCTGLQPKPKK) are Cytoplasmic-facing. Residues 23 to 43 (WVLLMVRVVAFLATAAATLVM) form a helical membrane-spanning segment. The Extracellular portion of the chain corresponds to 44–75 (ALNKETKTLVVATVGNTPIKVTLTAKFQHTPA). Residues 76 to 96 (FVFFVIANGMASFHNLLMIMV) form a helical membrane-spanning segment. Topologically, residues 97–109 (ELCGQKLDYKGMR) are cytoplasmic. The chain crosses the membrane as a helical span at residues 110 to 130 (LAMVAILDMMTVALVSGGASA). At 131 to 163 (ATFMAELGKNGNSHARWDKICDKFETFCDHGGA) the chain is on the extracellular side. The chain crosses the membrane as a helical span at residues 164–184 (ALIASSAGLILMMIISVMSIM). Over 185–195 (KLLIKPKSDSS) the chain is Cytoplasmic.

It belongs to the Casparian strip membrane proteins (CASP) family. Homodimer and heterodimers.

It is found in the cell membrane. This is CASP-like protein 1B1 from Populus trichocarpa (Western balsam poplar).